The sequence spans 766 residues: 1,4-alpha-glucan branching enzyme GlgB (766 aa).

Asp-431 functions as the Nucleophile in the catalytic mechanism. The active-site Proton donor is the Glu-484.

It belongs to the glycosyl hydrolase 13 family. GlgB subfamily. In terms of assembly, monomer.

It catalyses the reaction Transfers a segment of a (1-&gt;4)-alpha-D-glucan chain to a primary hydroxy group in a similar glucan chain.. It functions in the pathway glycan biosynthesis; glycogen biosynthesis. In terms of biological role, catalyzes the formation of the alpha-1,6-glucosidic linkages in glycogen by scission of a 1,4-alpha-linked oligosaccharide from growing alpha-1,4-glucan chains and the subsequent attachment of the oligosaccharide to the alpha-1,6 position. This Thermosynechococcus vestitus (strain NIES-2133 / IAM M-273 / BP-1) protein is 1,4-alpha-glucan branching enzyme GlgB.